The chain runs to 208 residues: Ribosomal RNA large subunit methyltransferase E (208 aa).

S-adenosyl-L-methionine contacts are provided by Gly-63, Trp-65, Asp-83, Asp-99, and Asp-124. The active-site Proton acceptor is Lys-164.

This sequence belongs to the class I-like SAM-binding methyltransferase superfamily. RNA methyltransferase RlmE family.

The protein resides in the cytoplasm. The enzyme catalyses uridine(2552) in 23S rRNA + S-adenosyl-L-methionine = 2'-O-methyluridine(2552) in 23S rRNA + S-adenosyl-L-homocysteine + H(+). Specifically methylates the uridine in position 2552 of 23S rRNA at the 2'-O position of the ribose in the fully assembled 50S ribosomal subunit. The sequence is that of Ribosomal RNA large subunit methyltransferase E from Salmonella agona (strain SL483).